Reading from the N-terminus, the 204-residue chain is Protein XpaC (204 aa).

Its function is as follows. In double copy it causes aberrant cell morphology, filamentation and inhibits sporulation. Hydrolyzes 5-bromo-4-chloroindolyl phosphate. In Bacillus subtilis (strain 168), this protein is Protein XpaC (xpaC).